A 98-amino-acid chain; its full sequence is Gibberellin-regulated protein 1 (98 aa).

The signal sequence occupies residues 1-23 (MAISKALIASLLISLLVLQLVQA).

The protein belongs to the GASA family. Six disulfide bonds may be present. In terms of tissue distribution, expressed in flower buds, style, stamen filaments, vasculature of sepals, flower abscission zone and green siliques. Lower levels seen in the root phloem, cotyledons and vasculature of rosette leaves.

Its subcellular location is the secreted. Its function is as follows. Gibberellin-regulated protein that may function in hormonal controlled steps of development such as seed germination, flowering and seed maturation. The chain is Gibberellin-regulated protein 1 (GASA1) from Arabidopsis thaliana (Mouse-ear cress).